Reading from the N-terminus, the 464-residue chain is Arylsulfatase (464 aa).

The first 20 residues, 1-20 (MNKKAMAAAVSMILAGGAHA), serve as a signal peptide directing secretion. Residues D34, D35, and S72 each contribute to the Ca(2+) site. The Nucleophile role is filled by S72. Position 72 is a 3-oxoalanine (Ser) (S72). Residue H134 is part of the active site. Ca(2+) is bound by residues D329 and N330.

Belongs to the sulfatase family. Requires Ca(2+) as cofactor. Post-translationally, the conversion to 3-oxoalanine (also known as C-formylglycine, FGly), of a serine or cysteine residue in prokaryotes and of a cysteine residue in eukaryotes, is critical for catalytic activity.

The protein localises to the periplasm. The catalysed reaction is an aryl sulfate + H2O = a phenol + sulfate + H(+). Its function is as follows. Plays an important role in the mineralization of sulfates. The chain is Arylsulfatase (atsA) from Klebsiella aerogenes (Enterobacter aerogenes).